A 104-amino-acid polypeptide reads, in one-letter code: N(4)-acetylcytidine amidohydrolase (104 aa).

Residues 6 to 94 (ITFFQRFQND…IAEIYPNQTQ (89 aa)) form the ASCH domain. The active-site Proton acceptor is Lys21. Thr24 (nucleophile) is an active-site residue. Glu74 (proton donor) is an active-site residue.

It belongs to the N(4)-acetylcytidine amidohydrolase family.

It carries out the reaction N(4)-acetylcytidine + H2O = cytidine + acetate + H(+). The catalysed reaction is N(4)-acetyl-2'-deoxycytidine + H2O = 2'-deoxycytidine + acetate + H(+). It catalyses the reaction N(4)-acetylcytosine + H2O = cytosine + acetate + H(+). Functionally, catalyzes the hydrolysis of N(4)-acetylcytidine (ac4C). This is N(4)-acetylcytidine amidohydrolase (yqfB) from Salmonella dublin (strain CT_02021853).